The following is a 478-amino-acid chain: BTB/POZ domain-containing protein 17 (478 aa).

Positions M1–A28 are cleaved as a signal peptide. N-linked (GlcNAc...) asparagine glycans are attached at residues N61, N100, and N195. Residues S63–L132 form the BTB domain. The region spanning A169–Q269 is the BACK domain.

The protein localises to the secreted. The sequence is that of BTB/POZ domain-containing protein 17 (BTBD17) from Homo sapiens (Human).